The following is a 404-amino-acid chain: Serine/threonine transporter SstT (404 aa).

A run of 9 helical transmembrane segments spans residues 17-37 (IGIG…VTAI), 39-59 (ILGQ…VFAL), 75-95 (MTLI…VAVI), 138-158 (ALAT…GLAL), 179-199 (IVVW…FSTV), 212-232 (LLIL…NPLL), 287-307 (IPLG…VLTL), 319-339 (FLTA…ASGV), and 354-374 (FGIS…VGVI).

Belongs to the dicarboxylate/amino acid:cation symporter (DAACS) (TC 2.A.23) family.

It is found in the cell membrane. The catalysed reaction is L-serine(in) + Na(+)(in) = L-serine(out) + Na(+)(out). It catalyses the reaction L-threonine(in) + Na(+)(in) = L-threonine(out) + Na(+)(out). Its function is as follows. Involved in the import of serine and threonine into the cell, with the concomitant import of sodium (symport system). In Streptococcus equi subsp. equi (strain 4047), this protein is Serine/threonine transporter SstT.